The primary structure comprises 330 residues: Tetraacyldisaccharide 4'-kinase (330 aa).

An ATP-binding site is contributed by threonine 58 to threonine 65.

It belongs to the LpxK family.

It carries out the reaction a lipid A disaccharide + ATP = a lipid IVA + ADP + H(+). The protein operates within glycolipid biosynthesis; lipid IV(A) biosynthesis; lipid IV(A) from (3R)-3-hydroxytetradecanoyl-[acyl-carrier-protein] and UDP-N-acetyl-alpha-D-glucosamine: step 6/6. In terms of biological role, transfers the gamma-phosphate of ATP to the 4'-position of a tetraacyldisaccharide 1-phosphate intermediate (termed DS-1-P) to form tetraacyldisaccharide 1,4'-bis-phosphate (lipid IVA). The chain is Tetraacyldisaccharide 4'-kinase from Shewanella halifaxensis (strain HAW-EB4).